The following is a 235-amino-acid chain: Thiopurine S-methyltransferase (235 aa).

Residues Trp-13, Leu-48, Glu-69, and Arg-126 each contribute to the S-adenosyl-L-methionine site. The interval 199–235 is disordered; the sequence is PDPQNGAPRRVEHKVYQLTGKRPASPEADGRAAETED. Residues 226 to 235 show a composition bias toward basic and acidic residues; it reads ADGRAAETED.

This sequence belongs to the class I-like SAM-binding methyltransferase superfamily. TPMT family.

The protein localises to the cytoplasm. The enzyme catalyses S-adenosyl-L-methionine + a thiopurine = S-adenosyl-L-homocysteine + a thiopurine S-methylether.. The chain is Thiopurine S-methyltransferase from Stutzerimonas stutzeri (strain A1501) (Pseudomonas stutzeri).